The following is a 396-amino-acid chain: L-lactate dehydrogenase (396 aa).

Residues Met1–Gly380 form the FMN hydroxy acid dehydrogenase domain. A substrate-binding site is contributed by Tyr24. 2 residues coordinate FMN: Ser106 and Gln127. Tyr129 serves as a coordination point for substrate. FMN is bound at residue Thr155. Substrate is bound at residue Arg164. Lys251 contributes to the FMN binding site. His275 serves as the catalytic Proton acceptor. Arg278 contacts substrate. Position 306–330 (Asp306–Arg330) interacts with FMN.

This sequence belongs to the FMN-dependent alpha-hydroxy acid dehydrogenase family. The cofactor is FMN.

The protein resides in the cell inner membrane. It carries out the reaction (S)-lactate + A = pyruvate + AH2. Catalyzes the conversion of L-lactate to pyruvate. Is coupled to the respiratory chain. The polypeptide is L-lactate dehydrogenase (Salmonella schwarzengrund (strain CVM19633)).